The sequence spans 359 residues: Phosphoserine aminotransferase (359 aa).

Residue Arg41 coordinates L-glutamate. Residues 75-76, Trp101, Thr152, Asp171, and Gln194 contribute to the pyridoxal 5'-phosphate site; that span reads AS. Position 195 is an N6-(pyridoxal phosphate)lysine (Lys195). 236-237 provides a ligand contact to pyridoxal 5'-phosphate; sequence NT.

It belongs to the class-V pyridoxal-phosphate-dependent aminotransferase family. SerC subfamily. As to quaternary structure, homodimer. Requires pyridoxal 5'-phosphate as cofactor.

The protein localises to the cytoplasm. The catalysed reaction is O-phospho-L-serine + 2-oxoglutarate = 3-phosphooxypyruvate + L-glutamate. It carries out the reaction 4-(phosphooxy)-L-threonine + 2-oxoglutarate = (R)-3-hydroxy-2-oxo-4-phosphooxybutanoate + L-glutamate. It participates in amino-acid biosynthesis; L-serine biosynthesis; L-serine from 3-phospho-D-glycerate: step 2/3. It functions in the pathway cofactor biosynthesis; pyridoxine 5'-phosphate biosynthesis; pyridoxine 5'-phosphate from D-erythrose 4-phosphate: step 3/5. Catalyzes the reversible conversion of 3-phosphohydroxypyruvate to phosphoserine and of 3-hydroxy-2-oxo-4-phosphonooxybutanoate to phosphohydroxythreonine. The sequence is that of Phosphoserine aminotransferase from Acinetobacter baumannii (strain AB307-0294).